The primary structure comprises 393 residues: NAD(P)H-quinone oxidoreductase subunit H 1 (393 aa).

The protein belongs to the complex I 49 kDa subunit family. NDH-1 can be composed of about 15 different subunits; different subcomplexes with different compositions have been identified which probably have different functions.

It localises to the cell inner membrane. The enzyme catalyses a plastoquinone + NADH + (n+1) H(+)(in) = a plastoquinol + NAD(+) + n H(+)(out). It carries out the reaction a plastoquinone + NADPH + (n+1) H(+)(in) = a plastoquinol + NADP(+) + n H(+)(out). Its function is as follows. NDH-1 shuttles electrons from an unknown electron donor, via FMN and iron-sulfur (Fe-S) centers, to quinones in the respiratory and/or the photosynthetic chain. The immediate electron acceptor for the enzyme in this species is believed to be plastoquinone. Couples the redox reaction to proton translocation, and thus conserves the redox energy in a proton gradient. Cyanobacterial NDH-1 also plays a role in inorganic carbon-concentration. This chain is NAD(P)H-quinone oxidoreductase subunit H 1, found in Gloeobacter violaceus (strain ATCC 29082 / PCC 7421).